Consider the following 398-residue polypeptide: tRNA-specific 2-thiouridylase MnmA (398 aa).

ATP contacts are provided by residues 20 to 27 and leucine 46; that span reads AMSGGVDS. Residue cysteine 114 is the Nucleophile of the active site. Cysteine 114 and cysteine 210 are joined by a disulfide. Residue glycine 138 coordinates ATP. Residues 160 to 162 form an interaction with tRNA region; the sequence is RDQ. Residue cysteine 210 is the Cysteine persulfide intermediate of the active site.

This sequence belongs to the MnmA/TRMU family.

The protein resides in the cytoplasm. The catalysed reaction is S-sulfanyl-L-cysteinyl-[protein] + uridine(34) in tRNA + AH2 + ATP = 2-thiouridine(34) in tRNA + L-cysteinyl-[protein] + A + AMP + diphosphate + H(+). Catalyzes the 2-thiolation of uridine at the wobble position (U34) of tRNA, leading to the formation of s(2)U34. This Brucella suis (strain ATCC 23445 / NCTC 10510) protein is tRNA-specific 2-thiouridylase MnmA.